We begin with the raw amino-acid sequence, 97 residues long: MDFSQLGGLLDGMKKEFSQLEEKNKDTIHTSKSGGGMVSVSFNGLGELVDLQIDDSLLEDKEAMQIYLMSALNDGYKAVEENRKNLAFNMLGNFAKL.

Belongs to the YbaB/EbfC family. In terms of assembly, homodimer.

It localises to the cytoplasm. The protein localises to the nucleoid. Binds to DNA and alters its conformation. May be involved in regulation of gene expression, nucleoid organization and DNA protection. The sequence is that of Nucleoid-associated protein HP_0035 from Helicobacter pylori (strain ATCC 700392 / 26695) (Campylobacter pylori).